The following is a 443-amino-acid chain: MSKTLYQKIYDSHVVCEDKNNTSILYIDLHLLHEVTSPQAFDSLRNKKRKVRQVNKTFATMDHNVSTQIKNINASGSMAKKQMEQLIKNCQEFNISLYDINNPNQGIVHVIAPEKGMTLPGMTIVCGDSHTSTHGAFGALSFGIGTSEVEHVLATQTLKQKRFKNMKIEIVGEIPKFVTAKDIILFIIGKLGSSSGTGYVIEFCGNVVKKMSMEERMTVCNMAIEMGAKSGLIAPDEITYEYLKNKMYSPYGIFWKNSLDYWRFLKSDSDAQFDKYFTIDISNLAPQITWGTNPDQVISINEKIPDYNKIDSLVKKDAAKSACKYMGLRSDTYLTNISIDRVFIGSCTNARIEDLRSASVILKNKKIANHVKAIVVPGSGLVKKQAEKEGLDKIFIDSGFEWRLPGCSMCLGMNKDRLNFQERCASHSNRNFEGRQGRGGRTH.

[4Fe-4S] cluster is bound by residues Cys-347, Cys-407, and Cys-410.

It belongs to the aconitase/IPM isomerase family. LeuC type 1 subfamily. Heterodimer of LeuC and LeuD. [4Fe-4S] cluster is required as a cofactor.

It carries out the reaction (2R,3S)-3-isopropylmalate = (2S)-2-isopropylmalate. It functions in the pathway amino-acid biosynthesis; L-leucine biosynthesis; L-leucine from 3-methyl-2-oxobutanoate: step 2/4. Its function is as follows. Catalyzes the isomerization between 2-isopropylmalate and 3-isopropylmalate, via the formation of 2-isopropylmaleate. This is 3-isopropylmalate dehydratase large subunit from Buchnera aphidicola subsp. Uroleucon obscurum.